A 369-amino-acid chain; its full sequence is Anhydro-N-acetylmuramic acid kinase (369 aa).

12 to 19 serves as a coordination point for ATP; that stretch reads GTSMDGVD.

It belongs to the anhydro-N-acetylmuramic acid kinase family.

The catalysed reaction is 1,6-anhydro-N-acetyl-beta-muramate + ATP + H2O = N-acetyl-D-muramate 6-phosphate + ADP + H(+). Its pathway is amino-sugar metabolism; 1,6-anhydro-N-acetylmuramate degradation. It participates in cell wall biogenesis; peptidoglycan recycling. Its function is as follows. Catalyzes the specific phosphorylation of 1,6-anhydro-N-acetylmuramic acid (anhMurNAc) with the simultaneous cleavage of the 1,6-anhydro ring, generating MurNAc-6-P. Is required for the utilization of anhMurNAc either imported from the medium or derived from its own cell wall murein, and thus plays a role in cell wall recycling. This Shewanella putrefaciens (strain CN-32 / ATCC BAA-453) protein is Anhydro-N-acetylmuramic acid kinase.